Here is a 39-residue protein sequence, read N- to C-terminus: Ribonuclease UK114 (39 aa).

It belongs to the RutC family. Monomer. In terms of processing, the N-terminus may be blocked. As to expression, mainly expressed in the liver and kidney. Lower expression found in intestine, gizzard, glandular stomach, heart, brain and spleen.

It localises to the cytoplasm. Endoribonuclease responsible for the inhibition of the translation by cleaving mRNA. Inhibits cell-free protein synthesis. Cleaves phosphodiester bonds only in single-stranded RNA. The polypeptide is Ribonuclease UK114 (Gallus gallus (Chicken)).